Reading from the N-terminus, the 465-residue chain is Fumarate hydratase class II (465 aa).

Substrate is bound by residues 98-100 (SGT), Arg126, 129-132 (HPND), 139-141 (SSN), and Thr187. Catalysis depends on His188, which acts as the Proton donor/acceptor. Ser318 is an active-site residue. Substrate contacts are provided by residues Ser319 and 324–326 (KVN).

Belongs to the class-II fumarase/aspartase family. Fumarase subfamily. As to quaternary structure, homotetramer.

Its subcellular location is the cytoplasm. The enzyme catalyses (S)-malate = fumarate + H2O. Its pathway is carbohydrate metabolism; tricarboxylic acid cycle; (S)-malate from fumarate: step 1/1. Functionally, involved in the TCA cycle. Catalyzes the stereospecific interconversion of fumarate to L-malate. This chain is Fumarate hydratase class II, found in Yersinia pestis.